Here is a 391-residue protein sequence, read N- to C-terminus: Phosphoglycerate kinase (391 aa).

Residues 19 to 21 (DYN), R35, 58 to 61 (HMGR), R117, and R150 each bind substrate. Residues K201, E323, and 349 to 352 (GGDT) each bind ATP.

This sequence belongs to the phosphoglycerate kinase family. Monomer.

Its subcellular location is the cytoplasm. The enzyme catalyses (2R)-3-phosphoglycerate + ATP = (2R)-3-phospho-glyceroyl phosphate + ADP. Its pathway is carbohydrate degradation; glycolysis; pyruvate from D-glyceraldehyde 3-phosphate: step 2/5. The sequence is that of Phosphoglycerate kinase from Desulforapulum autotrophicum (strain ATCC 43914 / DSM 3382 / VKM B-1955 / HRM2) (Desulfobacterium autotrophicum).